Reading from the N-terminus, the 605-residue chain is Sulfite reductase [NADPH] flavoprotein alpha-component (605 aa).

The 139-residue stretch at 68–206 (VTVLYGSQTG…PAAEWLEGVL (139 aa)) folds into the Flavodoxin-like domain. FMN contacts are provided by residues 74–78 (SQTGN), 121–126 (STHGEG), and 154–185 (VLAL…KRIS). The disordered stretch occupies residues 213-234 (GGGSAAPAPAAASQTGESSYSR). In terms of domain architecture, FAD-binding FR-type spans 235-454 (TNPFRAEVLE…VQHNQNFKLP (220 aa)). 392-395 (RLYS) contacts FAD. NADP(+) contacts are provided by residues Asp-495 and 525-533 (SRDTEEKVY).

In terms of assembly, alpha(8)-beta(8). The alpha component is a flavoprotein, the beta component is a hemoprotein. The cofactor is FAD. It depends on FMN as a cofactor.

The catalysed reaction is hydrogen sulfide + 3 NADP(+) + 3 H2O = sulfite + 3 NADPH + 4 H(+). It functions in the pathway sulfur metabolism; hydrogen sulfide biosynthesis; hydrogen sulfide from sulfite (NADPH route): step 1/1. In terms of biological role, component of the sulfite reductase complex that catalyzes the 6-electron reduction of sulfite to sulfide. This is one of several activities required for the biosynthesis of L-cysteine from sulfate. The flavoprotein component catalyzes the electron flow from NADPH -&gt; FAD -&gt; FMN to the hemoprotein component. The polypeptide is Sulfite reductase [NADPH] flavoprotein alpha-component (cysJ) (Bacillus subtilis (strain 168)).